Here is a 301-residue protein sequence, read N- to C-terminus: Recombination-associated protein RdgC (301 aa).

This sequence belongs to the RdgC family.

The protein resides in the cytoplasm. It is found in the nucleoid. May be involved in recombination. The polypeptide is Recombination-associated protein RdgC (Xanthomonas oryzae pv. oryzae (strain KACC10331 / KXO85)).